The chain runs to 148 residues: Auxin-responsive protein SAUR65 (148 aa).

The protein belongs to the ARG7 family.

It is found in the cell membrane. May promote auxin-stimulated organ elongation, such as hypocotyls, stamen filaments and petals. This Arabidopsis thaliana (Mouse-ear cress) protein is Auxin-responsive protein SAUR65.